The sequence spans 375 residues: Queuine tRNA-ribosyltransferase (375 aa).

Aspartate 90 serves as the catalytic Proton acceptor. Substrate-binding positions include 90 to 94 (DSGGF), aspartate 144, glutamine 190, and glycine 217. Residues 248–254 (GIGTPHY) form an RNA binding region. The Nucleophile role is filled by aspartate 267. Residues 272 to 276 (ARITR) form an RNA binding; important for wobble base 34 recognition region. Residues cysteine 305, cysteine 307, cysteine 310, and histidine 336 each coordinate Zn(2+).

This sequence belongs to the queuine tRNA-ribosyltransferase family. As to quaternary structure, homodimer. Within each dimer, one monomer is responsible for RNA recognition and catalysis, while the other monomer binds to the replacement base PreQ1. Zn(2+) is required as a cofactor.

The catalysed reaction is 7-aminomethyl-7-carbaguanine + guanosine(34) in tRNA = 7-aminomethyl-7-carbaguanosine(34) in tRNA + guanine. Its pathway is tRNA modification; tRNA-queuosine biosynthesis. Functionally, catalyzes the base-exchange of a guanine (G) residue with the queuine precursor 7-aminomethyl-7-deazaguanine (PreQ1) at position 34 (anticodon wobble position) in tRNAs with GU(N) anticodons (tRNA-Asp, -Asn, -His and -Tyr). Catalysis occurs through a double-displacement mechanism. The nucleophile active site attacks the C1' of nucleotide 34 to detach the guanine base from the RNA, forming a covalent enzyme-RNA intermediate. The proton acceptor active site deprotonates the incoming PreQ1, allowing a nucleophilic attack on the C1' of the ribose to form the product. After dissociation, two additional enzymatic reactions on the tRNA convert PreQ1 to queuine (Q), resulting in the hypermodified nucleoside queuosine (7-(((4,5-cis-dihydroxy-2-cyclopenten-1-yl)amino)methyl)-7-deazaguanosine). The polypeptide is Queuine tRNA-ribosyltransferase (Borreliella burgdorferi (strain ATCC 35210 / DSM 4680 / CIP 102532 / B31) (Borrelia burgdorferi)).